The chain runs to 797 residues: N-acetylneuraminate (7)9-O-acetyltransferase (797 aa).

The Cytoplasmic portion of the chain corresponds to 1–18 (MAALAYNLGKREINHYFS). Residues 19–39 (VRSAKVLALVAVLLLAACHLA) traverse the membrane as a helical segment. The Lumenal portion of the chain corresponds to 40-313 (SRRYRGNDSC…QPRPPVTLIQ (274 aa)). An N-linked (GlcNAc...) asparagine glycan is attached at asparagine 46. Serine 94 acts as the Acyl-ester intermediate in catalysis. N-linked (GlcNAc...) asparagine glycosylation is found at asparagine 175 and asparagine 187. Active-site residues include aspartate 270 and histidine 273. Residues 314-334 (KLAACFFTLSIIGYLIFYIIH) traverse the membrane as a helical segment. Residues 335-363 (RNAHRKNKPCTDLESGEEKKNIINTPVSS) are Cytoplasmic-facing. A helical transmembrane segment spans residues 364–384 (LEILLQSFCKLGLIMAYFYMC). Residues 385-395 (DRANLFMKENK) lie on the Lumenal side of the membrane. The chain crosses the membrane as a helical span at residues 396–416 (FYTHSSFFIPIIYILVLGVFY). Residues 417–439 (NENTKETKVLNREQTDEWKGWMQ) are Cytoplasmic-facing. Residues 440–460 (LVILIYHISGASTFLPVYMHI) traverse the membrane as a helical segment. Arginine 461 is a topological domain (lumenal). Residues 462–482 (VLVAAYLFQTGYGHFSYFWIK) form a helical membrane-spanning segment. The Cytoplasmic segment spans residues 483–486 (GDFG). The chain crosses the membrane as a helical span at residues 487–507 (IYRVCQVLFRLNFLVVVLCIV). Topologically, residues 508–513 (MDRPYQ) are lumenal. A helical transmembrane segment spans residues 514 to 534 (FYYFVPLVTVWFMVIYVTLAL). Topologically, residues 535–547 (WPQIIQKKANGNC) are cytoplasmic. A helical membrane pass occupies residues 548–568 (FWHFGLLLKLGFLLLFICFLA). Residues 569-605 (YSQGAFEKIFSLWPLSKCFELKGNVYEWWFRWRLDRY) are Lumenal-facing. A helical membrane pass occupies residues 606–626 (VVFHGMLFAFIYLALQKRQIL). The Cytoplasmic segment spans residues 627–638 (SEGKGEPLFSNK). The chain crosses the membrane as a helical span at residues 639–659 (ISNFLLFISVVSFLTYSIWAS). At 660–671 (SCKNKAECNELH) the chain is on the lumenal side. The chain crosses the membrane as a helical span at residues 672–692 (PSVSVVQILAFILIRNIPGYA). Residues 693–698 (RSVYSS) lie on the Cytoplasmic side of the membrane. The chain crosses the membrane as a helical span at residues 699–719 (FFAWFGKISLELFICQYHIWL). Residues 720–725 (AADTRG) are Lumenal-facing. The chain crosses the membrane as a helical span at residues 726–746 (ILVLIPGNPMLNIIVSTFIFV). The Cytoplasmic segment spans residues 747–770 (CVAHEISQITNDLAQIIIPKDNSS). A helical transmembrane segment spans residues 771 to 791 (LLKRLACIAAFFCGLLILSSI). The Lumenal portion of the chain corresponds to 792–797 (QDKSKH).

Belongs to the PC-esterase family. CASD1 subfamily. Post-translationally, N-glycosylated. In terms of tissue distribution, highly expressed in peripheral B lymphocytes.

The protein localises to the golgi apparatus membrane. It catalyses the reaction CMP-N-acetyl-beta-neuraminate + acetyl-CoA = CMP-N-acetyl-9-O-acetyl-beta-neuraminate + CoA. The enzyme catalyses a ganglioside GD3 (d18:1(4E)) + acetyl-CoA = a ganglioside Ac-O-7-GD3(d18:1(4E)) + CoA. It carries out the reaction CMP-N-acetyl-beta-neuraminate + acetyl-CoA = CMP-N-acetyl-7-O-acetyl-beta-neuraminate + CoA. In terms of biological role, key enzyme in the biosynthesis of O-acetylated (O-Ac) sialoglycans such as gangliosides O-AcGD3 and O-AcGD2, which affect various processes such as cell-cell interactions, host-pathogen recognition. Catalyzes the transfer of an acetyl group from a donor, the acetyl-coenzyme-A molecule (acetyl-CoA), to the C7/8/9 OH-position of a sialic acid residue. The primary site of O-acetyl group transfer on sialic acid seems to depend on cell type and can be C7, from which the O-acetyl group could subsequently migrate to the C8 and then to the C9 position, or at C9 with possibility of migrating to the C8 and then to the C7 position. Together with ST8SIA1 (GD3 synthase) it increases the levels of ganglioside Ac-O-7-GD3. Can transfer the acetyl group from acetyl-CoA to free sialate (N-acetylneuraminate, Neu5Ac) in vitro, but has preferred substrate specificity for CMP-activated sialate (CMP-Neu5Ac), resulting in the formation of 9-O-acetylated CMP-Neu5Ac (CMP-Neu5,9Ac2). CMP-Neu5,9Ac2 may be used by sialyltransferases as a sialate donor for glycoconjugate acceptors such as ganglioside GD3. O-acetylation at position C9 of ganglioside GD3 can counteract the pro-apoptotic effects of the ganglioside GD3 in tumor cells. The sequence is that of N-acetylneuraminate (7)9-O-acetyltransferase from Homo sapiens (Human).